Consider the following 782-residue polypeptide: DNA repair and recombination protein RAD54-like (782 aa).

The span at 1-20 (MRRSLAPSQRGGQRLSSRND) shows a compositional bias: polar residues. Residues 1–28 (MRRSLAPSQRGGQRLSSRNDFTPPLLKK) form a disordered region. The interval 2 to 9 (RRSLAPSQ) is required for chromatin remodeling, strand pairing activities and coupling of ATPase activity. Threonine 22 bears the Phosphothreonine mark. Residues 168-343 (EGKRGNFNGC…FSLVNFVNPE (176 aa)) enclose the Helicase ATP-binding domain. 181-188 (DEMGLGKT) contributes to the ATP binding site. The short motif at 294–297 (DEGH) is the DEGH box element. In terms of domain architecture, Helicase C-terminal spans 501 to 658 (LLDFMLAAIR…NNESAEKHFT (158 aa)). Positions 741-753 (SQKIEATPATETS) are enriched in polar residues. The tract at residues 741-782 (SQKIEATPATETSVEAKLEPERRKRPAMPLSDDSADEDFQGF) is disordered. A compositionally biased stretch (acidic residues) spans 773-782 (DSADEDFQGF).

This sequence belongs to the SNF2/RAD54 helicase family. As to quaternary structure, interacts (via N-terminus) with spn-A/Rad51.

It is found in the nucleus. Functionally, involved in mitotic DNA repair and meiotic recombination. Functions in the recombinational DNA repair pathway. Essential for interhomolog gene conversion (GC), but may have a less important role in intersister GC than spn-A/Rad51. In the presence of DNA, spn-A/Rad51 enhances the ATPase activity of okr/Rad54. In Drosophila persimilis (Fruit fly), this protein is DNA repair and recombination protein RAD54-like.